The following is a 498-amino-acid chain: Tyrosine 3-monooxygenase (498 aa).

Over residues 1 to 10 (MPTPSAPSPQ) the composition is skewed to pro residues. The disordered stretch occupies residues 1-31 (MPTPSAPSPQPKGFRRAVSEQDAKQAEAVTS). Residue S19 is modified to Phosphoserine; by CaMK2. A Phosphoserine modification is found at S31. S40 is modified (phosphoserine; by CaMK2 and PKA). Positions 331, 336, and 376 each coordinate Fe cation. S472 bears the Phosphoserine mark.

The protein belongs to the biopterin-dependent aromatic amino acid hydroxylase family. Homotetramer. Interacts (when phosphorylated at Ser-19) with YWHAG; one YWHAG dimer binds to one TH tetramer and this interaction may influence the phosphorylation and dephosphorylation of other sites. Interacts with NT5DC2; the interaction results in reduced phosphorylation and decreased catalytic activity of TH. The cofactor is Fe(2+). Phosphorylated on Ser-19, Ser-31 and Ser-40 by several protein kinases with different site specificities. Phosphorylation at Ser-31 and Ser-40 leads to an increase of TH activity. Phosphorylation at Ser-40 activates the enzyme and also counteracts the feedback inhibition of TH by catecholamines. Phosphorylation of Ser-19 and Ser-31 triggers the proteasomal degradation of TH through the ubiquitin-proteasome pathway. Phosphorylation at Ser-31 facilitates transport of TH from the soma to the nerve terminals via the microtubule network. Phosphorylation at Ser-19 induces the high-affinity binding to the 14-3-3 protein YWHAG; this interaction may influence the phosphorylation and dephosphorylation of other sites. Ser-19 increases the phosphorylation at Ser-40 in a hierarchical manner, leading to increased activity.

The protein resides in the cytoplasm. It localises to the perinuclear region. Its subcellular location is the nucleus. The protein localises to the cell projection. It is found in the axon. The protein resides in the cytoplasmic vesicle. It localises to the secretory vesicle. Its subcellular location is the synaptic vesicle. The catalysed reaction is (6R)-L-erythro-5,6,7,8-tetrahydrobiopterin + L-tyrosine + O2 = (4aS,6R)-4a-hydroxy-L-erythro-5,6,7,8-tetrahydrobiopterin + L-dopa. Its pathway is catecholamine biosynthesis; dopamine biosynthesis; dopamine from L-tyrosine: step 1/2. Its activity is regulated as follows. Inhibited in feedback fashion by the catecholamine neurotransmitters, especially by dopamine in competition with tetrahydrobiopterin. Phosphorylation of several Ser/Thr residues in the N-terminus regulates the catalytic activity. Ser-31 and Ser-40 are readily phosphorylated to activate the catalytic activity. A cysteine modification induced by N-ethylmaleimide (NEM), inhibits tyrosine 3-monooxygenase activity through the modification of the Cys-177. Functionally, catalyzes the conversion of L-tyrosine to L-dihydroxyphenylalanine (L-Dopa), the rate-limiting step in the biosynthesis of catecholamines, dopamine, noradrenaline, and adrenaline. Uses tetrahydrobiopterin and molecular oxygen to convert tyrosine to L-Dopa. In addition to tyrosine, is able to catalyze the hydroxylation of phenylalanine and tryptophan but with lower specificity. Positively regulates the regression of retinal hyaloid vessels during postnatal development. The chain is Tyrosine 3-monooxygenase (Th) from Rattus norvegicus (Rat).